The chain runs to 425 residues: Formyl-CoA:oxalate CoA-transferase (425 aa).

CoA is bound by residues 17-18 (QS), R38, 72-75 (LDTK), 96-98 (NFG), R104, and 136-139 (KVYE). D168 functions as the Nucleophile in the catalytic mechanism. 247 to 249 (GGQ) serves as a coordination point for substrate.

Belongs to the CoA-transferase III family. Frc subfamily. Homodimer.

It catalyses the reaction formyl-CoA + oxalate = oxalyl-CoA + formate. It participates in metabolic intermediate degradation; oxalate degradation; CO(2) and formate from oxalate: step 1/2. In terms of biological role, involved in the catabolism of oxalate and in the adapatation to low pH via the induction of the oxalate-dependent acid tolerance response (ATR). Catalyzes the transfer of the CoA moiety from formyl-CoA to oxalate. This is Formyl-CoA:oxalate CoA-transferase from Bradyrhizobium sp. (strain ORS 278).